Consider the following 252-residue polypeptide: Tabtoxin biosynthesis enzyme (252 aa).

Positions M1 to N23 are disordered.

Functionally, may play a role in tabtoxin biosynthesis. This is Tabtoxin biosynthesis enzyme (tblA) from Pseudomonas amygdali pv. tabaci (Pseudomonas syringae pv. tabaci).